We begin with the raw amino-acid sequence, 212 residues long: Large ribosomal subunit protein uL4 (212 aa).

Belongs to the universal ribosomal protein uL4 family. Part of the 50S ribosomal subunit.

Its function is as follows. One of the primary rRNA binding proteins, this protein initially binds near the 5'-end of the 23S rRNA. It is important during the early stages of 50S assembly. It makes multiple contacts with different domains of the 23S rRNA in the assembled 50S subunit and ribosome. In terms of biological role, forms part of the polypeptide exit tunnel. The chain is Large ribosomal subunit protein uL4 from Phenylobacterium zucineum (strain HLK1).